Reading from the N-terminus, the 278-residue chain is Thioredoxin-related transmembrane protein 1 (278 aa).

Residues 1-26 form the signal peptide; it reads MAHLGRLMVPLAALVLLLWAVPGAHG. The 106-residue stretch at 27–132 folds into the Thioredoxin domain; it reads RRNNVRVLTD…FINFVSDKEW (106 aa). Over 27–181 the chain is Extracellular; sequence RRNNVRVLTD…DLGIPAWGSY (155 aa). Residues Cys56 and Cys59 each act as nucleophile in the active site. Cysteines 56 and 59 form a disulfide. The helical transmembrane segment at 182-202 threads the bilayer; that stretch reads LVFAFATVLSGLLLGLCMIFV. Residues 203-278 lie on the Cytoplasmic side of the membrane; it reads ADCLCPSKRR…VGLPSATDTS (76 aa). Residues Cys205 and Cys207 are each lipidated (S-palmitoyl cysteine). The segment covering 217–226 has biased composition (polar residues); sequence QYAKKTSPEF. Residues 217–278 are disordered; the sequence is QYAKKTSPEF…VGLPSATDTS (62 aa). Residues 235–251 show a composition bias toward acidic residues; sequence EEQEADEEDVSEEEAED. A phosphoserine mark is found at Ser245 and Ser278.

In terms of assembly, interacts with ATP2A2. Palmitoylated; palmitoylation is required for localization to mitochondria-associated endoplasmic reticulum membrane (MAM).

It localises to the endoplasmic reticulum membrane. The protein localises to the mitochondrion membrane. The protein resides in the secreted. It catalyses the reaction Catalyzes the rearrangement of -S-S- bonds in proteins.. Its function is as follows. Thiredoxin domain-containing protein that participates in various redox reactions through the reversible oxidation of its active center dithiol to a disulfide and catalyze dithiol-disulfide exchange reactions. Acts as a key inhibitor of the alternative triglyceride biosynthesis pathway by inhibiting the activity of TMEM68/DIESL at the endoplasmic reticulum, thereby restricting accumulation of triacylglycerol. The alternative triglyceride biosynthesis pathway mediates formation of triacylglycerol from diacylglycerol and membrane phospholipids. Acts as a protein disulfide isomerase by catalyzing formation or reduction of disulfide bonds. Specifically mediates formation of disulfide bonds of transmembrane proteins at the endoplasmic reticulum membrane. Involved in ER-associated degradation (ERAD) via its protein disulfide isomerase activity by acting on folding-defective polypeptides at the endoplasmic reticulum membrane. Acts as a negative regulator of platelet aggregation following secretion in the extracellular space. Acts as a regulator of endoplasmic reticulum-mitochondria contact sites via its ability to regulate redox signals. Regulates endoplasmic reticulum-mitochondria Ca(2+) flux. This Mus musculus (Mouse) protein is Thioredoxin-related transmembrane protein 1.